The chain runs to 252 residues: 5'-nucleotidase SurE (252 aa).

The a divalent metal cation site is built by Asp8, Asp9, Ser39, and Asn96.

It belongs to the SurE nucleotidase family. A divalent metal cation serves as cofactor.

Its subcellular location is the cytoplasm. The catalysed reaction is a ribonucleoside 5'-phosphate + H2O = a ribonucleoside + phosphate. Functionally, nucleotidase that shows phosphatase activity on nucleoside 5'-monophosphates. The sequence is that of 5'-nucleotidase SurE from Petrotoga mobilis (strain DSM 10674 / SJ95).